The chain runs to 3133 residues: Probable polyketide synthase 38 (3133 aa).

One can recognise a Ketosynthase family 3 (KS3) domain in the interval 9-440 (DDDVAVIGIG…GSNVCLILSE (432 aa)). Catalysis depends on for beta-ketoacyl synthase activity residues C181, H320, and H363. An acyl/malonyl transferase region spans residues 647–680 (GVSADIIIGHSLGEISSAYCSGMIDFQTLCYLTY). S657 serves as the catalytic For acyl/malonyl transferase activity. The tract at residues 945-1067 (GPSIHSLGNN…GNFSLSKHNI (123 aa)) is N-terminal hotdog fold. The region spanning 945–1248 (GPSIHSLGNN…CTIVASNPDS (304 aa)) is the PKS/mFAS DH domain. Catalysis depends on H979, which acts as the Proton acceptor; for dehydratase activity. The segment at 1083–1248 (NFTCISKQDL…CTIVASNPDS (166 aa)) is C-terminal hotdog fold. D1155 acts as the Proton donor; for dehydratase activity in catalysis. Residues 1370–1408 (NNNNNNNNNNNNNNNNNNNNNNNNNNNNNNNNNDNDNDN) form a disordered region. A Carrier domain is found at 2562 to 2639 (NNNEIIRSTI…QSIEIIKSAH (78 aa)). O-(pantetheine 4'-phosphoryl)serine is present on S2599. Residues 2649–2711 (NNNNSNHHDN…NNNNNNNNNN (63 aa)) adopt a coiled-coil conformation. 2 disordered regions span residues 2691-2715 (LNNN…NNNN) and 2794-2817 (GNIS…NNNQ). Composition is skewed to low complexity over residues 2692–2715 (NNNN…NNNN) and 2795–2817 (NISN…NNNQ).

Requires pantetheine 4'-phosphate as cofactor.

Its function is as follows. Probable polyketide synthase. The sequence is that of Probable polyketide synthase 38 (pks38) from Dictyostelium discoideum (Social amoeba).